A 1705-amino-acid chain; its full sequence is Clathrin heavy chain 1 (1705 aa).

Residue alanine 2 is modified to N-acetylalanine. The segment at 2 to 492 (AAANAPIIMK…VDNDLALKIY (491 aa)) is globular terminal domain. WD40-like repeat regions lie at residues 25 to 67 (FITF…RPIT), 68 to 113 (ADSA…MPEQ), 114 to 155 (VAFW…ANLA), 156 to 205 (NNQI…QALE), 206 to 270 (AHAA…PDFA), 271 to 314 (DDFP…ISPD), and 315 to 343 (PIFL…ATVN). The interval 462–478 (ENWLAEDKLECSEELGD) is binding site for the uncoating ATPase, involved in lattice disassembly. The segment at 493-536 (IKARATPKVVAAFAERREFDKILIYSKQVGYTPDYMFLLQTILR) is flexible linker. Residues 537–648 (TDPQGAVNFA…QSLKHYSELP (112 aa)) form a distal segment region. The interval 537–1705 (TDPQGAVNFA…PYGMPPMGGY (1169 aa)) is heavy chain arm. CHCR repeat units follow at residues 551–697 (QMEG…QIIV), 700–842 (CKEY…PEDF), 847–986 (ILSV…QLID), 993–1138 (LPES…VSDA), 1142–1283 (FIRA…FRLA), 1288–1434 (LNII…DIIN), and 1437–1580 (LNVL…KECF). Positions 653–1705 (VIVNTHAIEP…PYGMPPMGGY (1053 aa)) are proximal segment. Residues 1227–1536 (AAKIIYAFIS…YIYKKAGRWK (310 aa)) are involved in binding clathrin light chain. A trimerization region spans residues 1564-1705 (AEQLLVYFIE…PYGMPPMGGY (142 aa)).

The protein belongs to the clathrin heavy chain family. As to quaternary structure, clathrin triskelions, composed of 3 heavy chains and 3 light chains, are the basic subunits of the clathrin coat. Interacts with SCYL2B.

The protein localises to the cytoplasmic vesicle membrane. The protein resides in the membrane. It localises to the coated pit. In terms of biological role, clathrin is the major protein of the polyhedral coat of coated pits and vesicles. Mediates endocytosis and is required for a correct polar distribution of PIN auxin transporters. The polypeptide is Clathrin heavy chain 1 (Arabidopsis thaliana (Mouse-ear cress)).